Reading from the N-terminus, the 299-residue chain is Oxygen-dependent coproporphyrinogen-III oxidase (299 aa).

A substrate-binding site is contributed by Ser92. His96 and His106 together coordinate a divalent metal cation. His106 serves as the catalytic Proton donor. 108-110 serves as a coordination point for substrate; it reads NVR. 2 residues coordinate a divalent metal cation: His145 and His175. Positions 239-274 are important for dimerization; sequence YVEFNLVYDRGTLFGLQSGGRAESILMSLPPQVRWE. Position 257 to 259 (257 to 259) interacts with substrate; the sequence is GGR.

It belongs to the aerobic coproporphyrinogen-III oxidase family. As to quaternary structure, homodimer. A divalent metal cation serves as cofactor.

Its subcellular location is the cytoplasm. The enzyme catalyses coproporphyrinogen III + O2 + 2 H(+) = protoporphyrinogen IX + 2 CO2 + 2 H2O. The protein operates within porphyrin-containing compound metabolism; protoporphyrin-IX biosynthesis; protoporphyrinogen-IX from coproporphyrinogen-III (O2 route): step 1/1. Involved in the heme biosynthesis. Catalyzes the aerobic oxidative decarboxylation of propionate groups of rings A and B of coproporphyrinogen-III to yield the vinyl groups in protoporphyrinogen-IX. This is Oxygen-dependent coproporphyrinogen-III oxidase from Xanthomonas campestris pv. campestris (strain 8004).